A 168-amino-acid polypeptide reads, in one-letter code: Ribosome maturation factor RimP (168 aa).

This sequence belongs to the RimP family.

The protein resides in the cytoplasm. Functionally, required for maturation of 30S ribosomal subunits. In Mycoplasma mobile (strain ATCC 43663 / 163K / NCTC 11711) (Mesomycoplasma mobile), this protein is Ribosome maturation factor RimP.